Here is a 379-residue protein sequence, read N- to C-terminus: Homoserine O-acetyltransferase (379 aa).

An AB hydrolase-1 domain is found at 52–356 (NVVVVLHALT…VYGHDGFLVE (305 aa)). Ser157 serves as the catalytic Nucleophile. Arg227 lines the substrate pocket. Active-site residues include Asp320 and His350. Asp351 is a binding site for substrate.

It belongs to the AB hydrolase superfamily. MetX family. In terms of assembly, homodimer.

It is found in the cytoplasm. It catalyses the reaction L-homoserine + acetyl-CoA = O-acetyl-L-homoserine + CoA. Its pathway is amino-acid biosynthesis; L-methionine biosynthesis via de novo pathway; O-acetyl-L-homoserine from L-homoserine: step 1/1. Transfers an acetyl group from acetyl-CoA to L-homoserine, forming acetyl-L-homoserine. This is Homoserine O-acetyltransferase from Mycobacterium tuberculosis (strain CDC 1551 / Oshkosh).